The sequence spans 159 residues: ATP synthase subunit b (159 aa).

The helical transmembrane segment at 2–22 threads the bilayer; it reads NISIPQIIAAILNFIILLLIV.

This sequence belongs to the ATPase B chain family. F-type ATPases have 2 components, F(1) - the catalytic core - and F(0) - the membrane proton channel. F(1) has five subunits: alpha(3), beta(3), gamma(1), delta(1), epsilon(1). F(0) has three main subunits: a(1), b(2) and c(10-14). The alpha and beta chains form an alternating ring which encloses part of the gamma chain. F(1) is attached to F(0) by a central stalk formed by the gamma and epsilon chains, while a peripheral stalk is formed by the delta and b chains.

Its subcellular location is the cell membrane. Functionally, f(1)F(0) ATP synthase produces ATP from ADP in the presence of a proton or sodium gradient. F-type ATPases consist of two structural domains, F(1) containing the extramembraneous catalytic core and F(0) containing the membrane proton channel, linked together by a central stalk and a peripheral stalk. During catalysis, ATP synthesis in the catalytic domain of F(1) is coupled via a rotary mechanism of the central stalk subunits to proton translocation. Its function is as follows. Component of the F(0) channel, it forms part of the peripheral stalk, linking F(1) to F(0). The protein is ATP synthase subunit b of Clostridium botulinum (strain ATCC 19397 / Type A).